Here is a 526-residue protein sequence, read N- to C-terminus: MWFVLYIFLALPLLLVAYLELSTFRRRRVLNKFNGPRGLPLMGNAHQMGKNPSEILDTVFSWWHQYGKDNFVFWIGTYSNVLVTSSKYLEFILSSQTLITKSDIYQLTHPWLGLGLLTSTGSKWHKHRKMITPAFHFNILQDFHEVMNENSTKFIKHLKTVAAGDNIFDFQEQAHYLTLDVICDTAMGVSINAMENRSSSIVQAFKDMCYNINMRAFHPLKRNELLYRLAPDYPAYSRTLKTLQDFTNEIIAKRIEAHKSGAVSTNAGDEFTRKKMAFLDTLLSSTIDGRPLNSKELYEEVSTFMFEGHDTTTSGVSFAVYLLSRHQDEQRKLFKEQREVMGNSELGRDATFQEISQMKYLDLFIKEAQRVYPSVPFIGRFTEKDYVIDGDLVPKGTTLNLGLVMLGYNEKVFKDPHKFRPERFELEKPGPFEYVPFSAGPRNCIGQKFALLEIKTVVSKIIRNFEVLPALDELVSKDGYISTTIGLPDAERKKRDPYRHKYDPILSAVLTLKSENGLYIRLKERH.

The heme site is built by E307 and C444.

It belongs to the cytochrome P450 family. Heme serves as cofactor.

Its subcellular location is the endoplasmic reticulum membrane. It localises to the microsome membrane. Functionally, may be involved in the metabolism of insect hormones and in the breakdown of synthetic insecticides. The chain is Cytochrome P450 4e2 (Cyp4e2) from Drosophila melanogaster (Fruit fly).